Reading from the N-terminus, the 486-residue chain is Serine/threonine-protein kinase 4 (486 aa).

One can recognise a Protein kinase domain in the interval 29-280 (FDVLEKLGEG…AIQLLQHPFV (252 aa)). ATP is bound by residues 35–43 (LGEGSYGSV) and Lys58. Catalysis depends on Asp148, which acts as the Proton acceptor. The residue at position 182 (Thr182) is a Phosphothreonine; by autocatalysis. The stretch at 288 to 324 (ILRDLINEAMDIKLKRQEAQQRELDQEDEENSEEDET) forms a coiled coil. The segment at 305 to 332 (EAQQRELDQEDEENSEEDETDSGTMVRA) is disordered. The segment covering 312 to 325 (DQEDEENSEEDETD) has biased composition (acidic residues). The SARAH domain occupies 432–479 (YEFLKTWSVDELQRRLSALDPMMEQEIEEIRQKYQSKRQPILDAIEAK).

It belongs to the protein kinase superfamily. STE Ser/Thr protein kinase family. STE20 subfamily. Homodimer; mediated via the coiled-coil region. Mg(2+) is required as a cofactor. Post-translationally, proteolytically cleaved by caspase-3 during apoptosis at Asp-325 resulting in a 37 kDa form. Proteolytic cleavage results in kinase activation and nuclear translocation of the truncated form (MST1/N).

It is found in the cytoplasm. Its subcellular location is the nucleus. It carries out the reaction L-seryl-[protein] + ATP = O-phospho-L-seryl-[protein] + ADP + H(+). It catalyses the reaction L-threonyl-[protein] + ATP = O-phospho-L-threonyl-[protein] + ADP + H(+). With respect to regulation, the C-terminal non-catalytic region inhibits the kinase activity, the enzyme is activated by caspase-cleavage. Homodimerization and autophosphorylation of Thr-182 is also required for full activation. In terms of biological role, stress-activated, pro-apoptotic kinase which, following caspase-cleavage, enters the nucleus and induces chromatin condensation followed by internucleosomal DNA fragmentation. Key component of the Hippo signaling pathway which plays a pivotal role in organ size control and tumor suppression by restricting proliferation and promoting apoptosis. The core of this pathway is composed of a kinase cascade wherein STK3/MST2 and STK4/MST1, in complex with its regulatory protein SAV1, phosphorylates and activates LATS1/2 in complex with its regulatory protein MOB1, which in turn phosphorylates and inactivates YAP1 oncoprotein and WWTR1/TAZ. Phosphorylation of YAP1 by LATS2 inhibits its translocation into the nucleus to regulate cellular genes important for cell proliferation, cell death, and cell migration. Phosphorylates 'Ser-14' of histone H2B (H2BS14ph) during apoptosis. Phosphorylates FOXO3 upon oxidative stress, which results in its nuclear translocation and cell death initiation. The polypeptide is Serine/threonine-protein kinase 4 (STK4) (Gallus gallus (Chicken)).